The primary structure comprises 67 residues: Conotoxin Pu5.1 (67 aa).

An N-terminal signal peptide occupies residues 1–22 (MRCVPVFVILLLLIASTPSVDA). Residues 23-51 (RPNPKDDVPLASFHEDANGILQMLWKKGR) constitute a propeptide that is removed on maturation. Tryptophan 63 carries the tryptophan amide modification.

This sequence belongs to the conotoxin T superfamily. Post-translationally, contains 2 disulfide bonds that can be either 'C1-C3, C2-C4' or 'C1-C4, C2-C3', since these disulfide connectivities have been observed for conotoxins with cysteine framework V (for examples, see AC P0DQQ7 and AC P81755). Expressed by the venom duct.

The protein localises to the secreted. The chain is Conotoxin Pu5.1 from Conus pulicarius (Flea-bitten cone).